Consider the following 376-residue polypeptide: Putative peptide import ATP-binding protein BMEII0205 (376 aa).

The segment at 1–25 (MPLRPALHLRTGKLRQTPTHNEPDG) is disordered. Residues 64–314 (VRTDDLVRDF…PLHPYSRALL (251 aa)) form the ABC transporter domain. 106-113 (GESGSGKS) is a binding site for ATP.

It belongs to the ABC transporter superfamily. In terms of assembly, the complex is composed of two ATP-binding proteins (BMEII0205 and BMEII0206), two transmembrane proteins (BMEII0207/BMEII0208 and BMEII0209) and a solute-binding protein (BMEII0210).

It is found in the cell inner membrane. Probably part of an ABC transporter complex that could be involved in peptide import. Probably responsible for energy coupling to the transport system. The polypeptide is Putative peptide import ATP-binding protein BMEII0205 (Brucella melitensis biotype 1 (strain ATCC 23456 / CCUG 17765 / NCTC 10094 / 16M)).